Consider the following 282-residue polypeptide: Armadillo repeat-containing protein 1 (282 aa).

N-acetylmethionine is present on Met-1. One copy of the ARM repeat lies at 39 to 81; that stretch reads GCLPGLILSMDHPNPPVVHSALLALRYLAECRANREKMKGELG. Thr-137 carries the phosphothreonine modification. A phosphoserine mark is found at Ser-189, Ser-246, Ser-260, and Ser-267. A disordered region spans residues 239-261; that stretch reads DYLPEDESPTKEQDKAVSRVGSH. Over residues 246 to 255 the composition is skewed to basic and acidic residues; the sequence is SPTKEQDKAV.

Interacts with mitochondrial contact site and cristae organizing system (MICOS) complex components IMMT/MIC60 and MICOS10/MIC10. Interacts with mitochondrial outer membrane sorting assembly machinery (SAM) complex components SAMM50 and MTX1.

The protein resides in the cytoplasm. It is found in the mitochondrion. Its subcellular location is the mitochondrion outer membrane. In terms of biological role, in association with mitochondrial contact site and cristae organizing system (MICOS) complex components and mitochondrial outer membrane sorting assembly machinery (SAM) complex components may regulate mitochondrial dynamics playing a role in determining mitochondrial length, distribution and motility. The protein is Armadillo repeat-containing protein 1 (ARMC1) of Pongo abelii (Sumatran orangutan).